A 124-amino-acid chain; its full sequence is Small ribosomal subunit protein uS12 (124 aa).

The segment at 8–30 (IRSARQDTEKQTKSPALKSCPQR) is disordered. Position 89 is a 3-methylthioaspartic acid (aspartate 89). The segment at 103 to 124 (DTAGVKDRKQSRSKYGAKKPKA) is disordered. Over residues 113–124 (SRSKYGAKKPKA) the composition is skewed to basic residues.

It belongs to the universal ribosomal protein uS12 family. In terms of assembly, part of the 30S ribosomal subunit. Contacts proteins S8 and S17. May interact with IF1 in the 30S initiation complex.

With S4 and S5 plays an important role in translational accuracy. Functionally, interacts with and stabilizes bases of the 16S rRNA that are involved in tRNA selection in the A site and with the mRNA backbone. Located at the interface of the 30S and 50S subunits, it traverses the body of the 30S subunit contacting proteins on the other side and probably holding the rRNA structure together. The combined cluster of proteins S8, S12 and S17 appears to hold together the shoulder and platform of the 30S subunit. This chain is Small ribosomal subunit protein uS12, found in Trichodesmium erythraeum (strain IMS101).